The chain runs to 170 residues: Inner membrane protein p22 (170 aa).

Residues 1–3 are Intravirion-facing; it reads MST. A helical transmembrane segment spans residues 4-24; sequence LLIALIALIVLLIIILVVFLY. The Virion surface portion of the chain corresponds to 25–170; sequence YKKQQPPKKV…LYLPRNHKYA (146 aa).

The protein belongs to the asfivirus inner membrane protein p22 family.

The protein localises to the virion membrane. It localises to the host cell membrane. The protein is Inner membrane protein p22 of Ornithodoros (relapsing fever ticks).